A 110-amino-acid polypeptide reads, in one-letter code: PHD finger-like domain-containing protein 5B (110 aa).

Belongs to the PHF5 family.

In Arabidopsis thaliana (Mouse-ear cress), this protein is PHD finger-like domain-containing protein 5B.